The following is a 300-amino-acid chain: Urease accessory protein UreD (300 aa).

This sequence belongs to the UreD family. As to quaternary structure, ureD, UreF and UreG form a complex that acts as a GTP-hydrolysis-dependent molecular chaperone, activating the urease apoprotein by helping to assemble the nickel containing metallocenter of UreC. The UreE protein probably delivers the nickel.

Its subcellular location is the cytoplasm. In terms of biological role, required for maturation of urease via the functional incorporation of the urease nickel metallocenter. The protein is Urease accessory protein UreD of Prochlorococcus marinus (strain MIT 9215).